A 429-amino-acid polypeptide reads, in one-letter code: Guanine nucleotide-binding protein subunit alpha (429 aa).

Gly-2 carries the N-myristoyl glycine lipid modification. Cys-3 carries the S-palmitoyl cysteine lipid modification. Residues 40 to 429 (KGVKLLLLGA…QQNLKKSGIM (390 aa)) enclose the G-alpha domain. The interval 43 to 56 (KLLLLGAGESGKST) is G1 motif. Residues Glu-51, Ser-52, Gly-53, Lys-54, Ser-55, and Thr-56 each coordinate GTP. Ser-55 contacts Mg(2+). The segment at 125-197 (LKQIDADVAG…KDSEQFTRLS (73 aa)) is not present in other G-proteins. Positions 249–257 (DILKGRIKT) are G2 motif. Residues Leu-251, Thr-257, Gly-279, Asn-345, Lys-346, Asp-348, and Ala-401 each contribute to the GTP site. Thr-257 contributes to the Mg(2+) binding site. The G3 motif stretch occupies residues 272–281 (FKVLDAGGQR). Residues 341 to 348 (ILFLNKID) are G4 motif. The interval 399–404 (TCATDS) is G5 motif.

This sequence belongs to the G-alpha family. G(q) subfamily. As to quaternary structure, g proteins are composed of 3 units; alpha, beta and gamma. The alpha chain contains the guanine nucleotide binding site. It depends on Mg(2+) as a cofactor.

In terms of biological role, guanine nucleotide-binding proteins (G proteins) are involved as modulators or transducers in various transmembrane signaling systems. Involved in the mating pathway. This is Guanine nucleotide-binding protein subunit alpha (CAG1) from Candida albicans (strain WO-1) (Yeast).